Here is a 505-residue protein sequence, read N- to C-terminus: Protein FAM114A2 (505 aa).

The tract at residues 1–65 is disordered; sequence MSDKDDIETP…KPSSDLETSK (65 aa). The segment covering 51 to 63 has biased composition (basic and acidic residues); that stretch reads KRPETKPSSDLET. Serine 87, serine 146, and serine 209 each carry phosphoserine. Residues 268–295 are a coiled coil; the sequence is LNSLSGEELETLKVELEQLKETFSLAEF. The segment at 342–366 is disordered; that stretch reads KSLTKPLAENEEGEKQSEAENTEQV.

Belongs to the FAM114 family.

The protein is Protein FAM114A2 (FAM114A2) of Homo sapiens (Human).